The following is a 209-amino-acid chain: Thymidylate kinase (209 aa).

Residue 10-17 coordinates ATP; that stretch reads GPDGAGKT.

The protein belongs to the thymidylate kinase family.

The catalysed reaction is dTMP + ATP = dTDP + ADP. Its function is as follows. Phosphorylation of dTMP to form dTDP in both de novo and salvage pathways of dTTP synthesis. This Pediococcus pentosaceus (strain ATCC 25745 / CCUG 21536 / LMG 10740 / 183-1w) protein is Thymidylate kinase.